The primary structure comprises 210 residues: Thiamine-phosphate synthase (210 aa).

4-amino-2-methyl-5-(diphosphooxymethyl)pyrimidine contacts are provided by residues 39–43 and Asn71; that span reads QLREK. Positions 72 and 91 each coordinate Mg(2+). A 4-amino-2-methyl-5-(diphosphooxymethyl)pyrimidine-binding site is contributed by Ser110. 2-[(2R,5Z)-2-carboxy-4-methylthiazol-5(2H)-ylidene]ethyl phosphate is bound at residue 134-136; it reads TPT. A 4-amino-2-methyl-5-(diphosphooxymethyl)pyrimidine-binding site is contributed by Lys137. Gly163 serves as a coordination point for 2-[(2R,5Z)-2-carboxy-4-methylthiazol-5(2H)-ylidene]ethyl phosphate.

This sequence belongs to the thiamine-phosphate synthase family. The cofactor is Mg(2+).

The enzyme catalyses 2-[(2R,5Z)-2-carboxy-4-methylthiazol-5(2H)-ylidene]ethyl phosphate + 4-amino-2-methyl-5-(diphosphooxymethyl)pyrimidine + 2 H(+) = thiamine phosphate + CO2 + diphosphate. The catalysed reaction is 2-(2-carboxy-4-methylthiazol-5-yl)ethyl phosphate + 4-amino-2-methyl-5-(diphosphooxymethyl)pyrimidine + 2 H(+) = thiamine phosphate + CO2 + diphosphate. It carries out the reaction 4-methyl-5-(2-phosphooxyethyl)-thiazole + 4-amino-2-methyl-5-(diphosphooxymethyl)pyrimidine + H(+) = thiamine phosphate + diphosphate. It functions in the pathway cofactor biosynthesis; thiamine diphosphate biosynthesis; thiamine phosphate from 4-amino-2-methyl-5-diphosphomethylpyrimidine and 4-methyl-5-(2-phosphoethyl)-thiazole: step 1/1. Functionally, condenses 4-methyl-5-(beta-hydroxyethyl)thiazole monophosphate (THZ-P) and 2-methyl-4-amino-5-hydroxymethyl pyrimidine pyrophosphate (HMP-PP) to form thiamine monophosphate (TMP). The polypeptide is Thiamine-phosphate synthase (Campylobacter jejuni (strain RM1221)).